We begin with the raw amino-acid sequence, 573 residues long: DNA polymerase lambda (573 aa).

One can recognise a BRCT domain in the interval 35–131; the sequence is DARGWLSSLR…KLTDTDGFSL (97 aa). The segment at 126 to 235 is disordered; that stretch reads TDGFSLSSPK…GPDPAPEALG (110 aa). The segment covering 127-149 has biased composition (polar residues); sequence DGFSLSSPKRSLNEPQPSKSGQD. Positions 263–277 are DNA-binding; that stretch reads KAYNVQGDKWRALGY. The active-site Schiff-base intermediate with DNA is the K310. The segment at 343 to 346 is DNA-binding; that stretch reads GTKT. Residues R384, 415 to 418, and 424 to 427 each bind dCTP; these read SFRR and GDVD. The involved in primer binding stretch occupies residues 418–427; the sequence is RGKVTCGDVD. Residues D425, D427, and D488 each coordinate Mn(2+). The DNA-binding stretch occupies residues 464–503; that stretch reads ENGQQQKYLGVCRLPGAGQRHRRLDIIVVPYSEFACALLY. N511 is a dCTP binding site.

The protein belongs to the DNA polymerase type-X family. Interacts with PCNA. Interacts with PAXX; promoting POLL recruitment to double-strand breaks (DSBs) and stimulation of the end-filling activity of POLL. Interacts with XRCC4; promoting POLL recruitment to double-strand breaks (DSBs) and stimulation of the end-filling activity of POLL. Interacts with NHEJ1/XLF; promoting POLL recruitment to double-strand breaks (DSBs) and stimulation of the end-filling activity of POLL. The cofactor is Mn(2+).

The protein resides in the nucleus. The enzyme catalyses DNA(n) + a 2'-deoxyribonucleoside 5'-triphosphate = DNA(n+1) + diphosphate. In terms of biological role, DNA polymerase that functions in several pathways of DNA repair. Involved in base excision repair (BER) responsible for repair of lesions that give rise to abasic (AP) sites in DNA. Also contributes to DNA double-strand break repair by non-homologous end joining and homologous recombination. Has both template-dependent and template-independent (terminal transferase) DNA polymerase activities. Also has a 5'-deoxyribose-5-phosphate lyase (dRP lyase) activity. This Rattus norvegicus (Rat) protein is DNA polymerase lambda.